Here is a 96-residue protein sequence, read N- to C-terminus: Putative toxin Y4kP (96 aa).

It belongs to the RelE toxin family.

Its function is as follows. Toxic component of a type II toxin-antitoxin (TA) system. The chain is Putative toxin Y4kP from Sinorhizobium fredii (strain NBRC 101917 / NGR234).